We begin with the raw amino-acid sequence, 307 residues long: F-box protein At5g03100 (307 aa).

The F-box domain occupies 8-54 (VDFISSLPDEILHHILANTPTKLAIRTSVLSKRWKHVWYETPSISIV).

The sequence is that of F-box protein At5g03100 from Arabidopsis thaliana (Mouse-ear cress).